The chain runs to 636 residues: Putative ankyrin repeat protein L766 (636 aa).

ANK repeat units follow at residues 63–97 (NNYL…DYEL), 99–129 (STCH…YIDS), 130–159 (FGNI…FFNC), 161–190 (YYYL…KSNN), 230–259 (FDEK…NYDF), 261–284 (TIIN…YLTD), 322–355 (SRII…KTSI), 372–400 (NPDE…NIPD), 425–455 (DSLE…DTTI), 517–546 (NSIE…NDNN), and 548–575 (LSWA…DIYQ).

This is Putative ankyrin repeat protein L766 from Acanthamoeba polyphaga mimivirus (APMV).